The sequence spans 279 residues: tRNA pseudouridine synthase A (279 aa).

Asp-54 acts as the Nucleophile in catalysis. Position 112 (Tyr-112) interacts with substrate.

This sequence belongs to the tRNA pseudouridine synthase TruA family. As to quaternary structure, homodimer.

The catalysed reaction is uridine(38/39/40) in tRNA = pseudouridine(38/39/40) in tRNA. Its function is as follows. Formation of pseudouridine at positions 38, 39 and 40 in the anticodon stem and loop of transfer RNAs. In Cutibacterium acnes (strain DSM 16379 / KPA171202) (Propionibacterium acnes), this protein is tRNA pseudouridine synthase A.